A 151-amino-acid chain; its full sequence is Deoxyuridine 5'-triphosphate nucleotidohydrolase (151 aa).

Residues 70–72 (RSG), Asn-83, 87–89 (LID), and Met-97 each bind substrate.

It belongs to the dUTPase family. Mg(2+) serves as cofactor.

The enzyme catalyses dUTP + H2O = dUMP + diphosphate + H(+). It functions in the pathway pyrimidine metabolism; dUMP biosynthesis; dUMP from dCTP (dUTP route): step 2/2. Its function is as follows. This enzyme is involved in nucleotide metabolism: it produces dUMP, the immediate precursor of thymidine nucleotides and it decreases the intracellular concentration of dUTP so that uracil cannot be incorporated into DNA. This Yersinia pseudotuberculosis serotype O:1b (strain IP 31758) protein is Deoxyuridine 5'-triphosphate nucleotidohydrolase.